The primary structure comprises 433 residues: ATP-sensitive inward rectifier potassium channel 12 (433 aa).

Over 1–77 (MTAASRANPY…LADMFTTCVD (77 aa)) the chain is Cytoplasmic. Cys-75 carries the post-translational modification S-nitrosocysteine. The helical transmembrane segment at 78–104 (IRWRYMLLIFSLAFLASWLLFGIIFWV) threads the bilayer. A 1,2-diacyl-sn-glycero-3-phospho-(1D-myo-inositol-4,5-bisphosphate) contacts are provided by Arg-79 and Arg-81. Over 105–129 (IAVAHGDLEPAEGRGRTPCVMQVHG) the chain is Extracellular. The cysteines at positions 123 and 155 are disulfide-linked. Positions 130–146 (FMAAFLFSIETQTTIGY) form an intramembrane region, helical; Pore-forming. Residues Thr-143, Ile-144, Gly-145, and Tyr-146 each contribute to the K(+) site. Residues 143–148 (TIGYGL) carry the Selectivity filter motif. Residues 147–155 (GLRCVTEEC) lie on the Extracellular side of the membrane. The helical transmembrane segment at 156-183 (PVAVFMVVAQSIVGCIIDSFMIGAIMAK) threads the bilayer. The a 1,2-diacyl-sn-glycero-3-phospho-(1D-myo-inositol-4,5-bisphosphate) site is built by Lys-183 and Lys-188. Residues 184 to 433 (MARPKKRAQT…QRPYRRESEI (250 aa)) lie on the Cytoplasmic side of the membrane. The segment at 387 to 433 (DEEDEADGDQDGRSRDGLSPQARHDFDRLQAGGGVLEQRPYRRESEI) is disordered. Residues 396 to 414 (QDGRSRDGLSPQARHDFDR) show a composition bias toward basic and acidic residues. Residues 431–433 (SEI) carry the PDZ-binding motif.

The protein belongs to the inward rectifier-type potassium channel (TC 1.A.2.1) family. KCNJ12 subfamily. Homotetramer. Forms heteromer with KCNJ4. Can form heteromeric channels with Kir2.6/KCNJ18. Association, via its PDZ-recognition domain, with LIN7A, LIN7B, LIN7C, DLG1, CASK and APBA1 plays a key role in its localization and trafficking.

The protein localises to the membrane. The protein resides in the cell membrane. It localises to the sarcolemma. Its subcellular location is the T-tubule. The enzyme catalyses K(+)(in) = K(+)(out). With respect to regulation, activated by phosphatidylinositol 4,5-biphosphate (PtdIns(4,5)P2). PtdIns(4,5)P2 binding to the cytoplasmic side of the channel triggers a conformation change leading to channel opening. Inhibited by Ba(2+). Inward rectifying potassium channel that probably participates in controlling the resting membrane potential in electrically excitable cells. Probably participates in establishing action potential waveform and excitability of neuronal and muscle tissues. Inward rectifier potassium channels are characterized by a greater tendency to allow potassium to flow into the cell rather than out of it. Their voltage dependence is regulated by the concentration of extracellular potassium; as external potassium is raised, the voltage range of the channel opening shifts to more positive voltages. The inward rectification is mainly due to the blockage of outward current by internal magnesium. The protein is ATP-sensitive inward rectifier potassium channel 12 (KCNJ12) of Homo sapiens (Human).